The primary structure comprises 542 residues: MSGLNIYFILQICSHTDTYFFIYSLSITLFFFSKYKMGVCISHEYSKPNAEQAEILQDFSKFMKPEERPPMAVEHQMYDYRLVEEEQDDELFAIVCCPHSIGYERDKIALVDLDPTSETFCTILSEVHLTSNGDEPGRMNWAKSAESLGEMNKFVRRNIIVPCMNSGKIYVIAFENEKLWIEKEIRNDELIRKDVSCPYAVRSLPLKGAPVHVSTLGDRFGNGKGDFILIDRRTWEVRKKSEPTFSDYGGDFSLQPRHNLMISSEWGHPRLLRDGFMPSELENVSESFGARLHVWQISPPKLIQSINLDTCDGSLVICVKFLHNADCNHAFAISAIGSSIFHLHMNTLTKEWAADRVAHVPLLKVENWQSDEMPALLTDMIISMDDRWLYVCGFLHGVLWRFDIQDPFRVSLHGKINLGGIFDSFPEVRIKTSNAMEDRWWLPPETRSLPRGTKFRGGPALMQLSKDGCRLYVCNSFYKAWDAQFYPELISDGGQMIRVDIVDDEMQLNEKFLIDMKGQPNGPFVIRDIKFLDGDCTSDSFL.

The protein belongs to the selenium-binding protein family.

In Caenorhabditis elegans, this protein is Putative selenium-binding protein.